A 118-amino-acid chain; its full sequence is Non-specific lipid-transfer protein 1 (118 aa).

An N-terminal signal peptide occupies residues 1–25 (MASLRVSCLVALMCMVVISAPMAEA). 4 disulfide bridges follow: Cys-29–Cys-76, Cys-39–Cys-53, Cys-54–Cys-99, and Cys-74–Cys-113.

This sequence belongs to the plant LTP family.

Functionally, plant non-specific lipid-transfer proteins transfer phospholipids as well as galactolipids across membranes. May play a role in wax or cutin deposition in the cell walls of expanding epidermal cells and certain secretory tissues. This Lens culinaris (Lentil) protein is Non-specific lipid-transfer protein 1.